Reading from the N-terminus, the 561-residue chain is Nucleoprotein (561 aa).

Residues 52–237 form a binding site for the cap structure m7GTP region; it reads VRKDKRTDSD…ISHEPSALNI (186 aa). The interval 336 to 355 is disordered; that stretch reads SKPSAIQPPVRNGGSPDLKQ. Aspartate 380 and glutamate 382 together coordinate Mn(2+). 4 residues coordinate Zn(2+): glutamate 390, cysteine 497, histidine 500, and cysteine 521. Aspartate 525 is a binding site for Mn(2+).

Belongs to the arenaviridae nucleocapsid protein family. In terms of assembly, homomultimerizes to form the nucleocapsid. Binds to viral genomic RNA. Interacts with glycoprotein G2. Interacts with protein Z; this interaction probably directs the encapsidated genome to budding sites. Interacts with protein L; this interaction does not interfere with Z-L interaction. Interacts with host IKBKE (via Protein kinase domain); the interaction inhibits IKBKE kinase activity.

The protein resides in the virion. It localises to the host cytoplasm. Functionally, encapsidates the genome, protecting it from nucleases. The encapsidated genomic RNA is termed the nucleocapsid (NC). Serves as template for viral transcription and replication. The increased presence of protein N in host cell does not seem to trigger the switch from transcription to replication as observed in other negative strain RNA viruses. Through the interaction with host IKBKE, strongly inhibits the phosphorylation and nuclear translocation of host IRF3, a protein involved in interferon activation pathway, leading to the inhibition of interferon-beta and IRF3-dependent promoters activation. Also encodes a functional 3'-5' exoribonuclease that degrades preferentially dsRNA substrates and thereby participates in the suppression of interferon induction. The protein is Nucleoprotein of Cavia cutleri (Guinea pig).